A 146-amino-acid chain; its full sequence is Snaclec agkisacutacin subunit B (146 aa).

The first 23 residues, 1-23, serve as a signal peptide directing secretion; that stretch reads MGRFIFVSFGLLVVFLSLSGTAA. Positions 24-146 constitute a C-type lectin domain; sequence DCPSDWSSYE…TCSFVCKFQA (123 aa). Disulfide bonds link C25–C36, C53–C142, and C119–C134. Positions 64 and 70 each coordinate Ca(2+).

Belongs to the snaclec family. In terms of assembly, heterodimer of subunits A and B; disulfide-linked. Expressed by the venom gland.

It is found in the secreted. Anticoagulant protein which binds to the gamma-carboxyglutamic acid-domain regions of factor IX (F9) and factor X (F10) in the presence of calcium with a 1 to 1 stoichiometry. Also inhibits platelet aggregation by binding to platelet glycoprotein Ibalpha (GP1BA) and functioning as a blocker of von Willebrand factor (VWF). Is devoid of hemorrhagic and lethal activities. Possesses antithrombotic and thrombolytic activities. Also hydrolyzes the Aalpha-chain of fibrinogen (FGA). Does not affect the Bbeta-chain (FGB) and the gamma chain (FGG). The protein is Snaclec agkisacutacin subunit B of Deinagkistrodon acutus (Hundred-pace snake).